A 496-amino-acid polypeptide reads, in one-letter code: Palmitoleoyl-protein carboxylesterase NOTUM (496 aa).

The signal sequence occupies residues 1 to 19; it reads MGRGVRVLLLLSLLHCAGG. The tract at residues 21–46 is disordered; it reads EGRKTWRRRGQQPPPPPRTEAAPAAG. Serine 81 carries the phosphoserine; by FAM20C modification. N-linked (GlcNAc...) asparagine glycosylation occurs at asparagine 96. Catalysis depends on charge relay system residues serine 232, aspartate 340, and histidine 389.

It belongs to the pectinacetylesterase family. Notum subfamily. In terms of tissue distribution, rarely expressed in adult normal tissues.

The protein localises to the secreted. It catalyses the reaction [Wnt protein]-O-(9Z)-hexadecenoyl-L-serine + H2O = [Wnt protein]-L-serine + (9Z)-hexadecenoate + H(+). In terms of biological role, carboxylesterase that acts as a key negative regulator of the Wnt signaling pathway by specifically mediating depalmitoleoylation of WNT proteins. Serine palmitoleoylation of WNT proteins is required for efficient binding to frizzled receptors. In Homo sapiens (Human), this protein is Palmitoleoyl-protein carboxylesterase NOTUM.